Here is a 554-residue protein sequence, read N- to C-terminus: Phosphomethylpyrimidine synthase (554 aa).

Residues Asn-191, Met-220, Tyr-249, His-285, Ser-305 to Gly-307, Asp-346 to Arg-349, and Glu-385 each bind substrate. His-389 contacts Zn(2+). Tyr-412 is a substrate binding site. Zn(2+) is bound at residue His-453. [4Fe-4S] cluster-binding residues include Cys-533, Cys-536, and Cys-541.

The protein belongs to the ThiC family. As to quaternary structure, homodimer. It depends on [4Fe-4S] cluster as a cofactor.

It catalyses the reaction 5-amino-1-(5-phospho-beta-D-ribosyl)imidazole + S-adenosyl-L-methionine = 4-amino-2-methyl-5-(phosphooxymethyl)pyrimidine + CO + 5'-deoxyadenosine + formate + L-methionine + 3 H(+). It participates in cofactor biosynthesis; thiamine diphosphate biosynthesis. Functionally, catalyzes the synthesis of the hydroxymethylpyrimidine phosphate (HMP-P) moiety of thiamine from aminoimidazole ribotide (AIR) in a radical S-adenosyl-L-methionine (SAM)-dependent reaction. The sequence is that of Phosphomethylpyrimidine synthase from Ehrlichia chaffeensis (strain ATCC CRL-10679 / Arkansas).